The primary structure comprises 371 residues: Putative F-box protein At1g58090 (371 aa).

The 46-residue stretch at 1 to 46 folds into the F-box domain; sequence MVSKKLPLDLEEEILFRVPPRSLVRFRSVCREWNTLFKNKRFINKN.

The chain is Putative F-box protein At1g58090 from Arabidopsis thaliana (Mouse-ear cress).